Consider the following 251-residue polypeptide: 3-isopropylmalate dehydratase small subunit 1 (251 aa).

Residues 1-59 (MAASLQSANPTLSRTLASPNKPSSFATFRSPFLRFNSTSVASNFKPLVSREASSSFVTR) constitute a chloroplast transit peptide.

It belongs to the LeuD family. As to quaternary structure, heterodimer of the large LEUC/IIL1 subunit and the small LEUD (SSU1, SSU2 or SSU3) subunits. In terms of tissue distribution, expressed at low levels in roots, root tips, at the basis of the hypocotyls, and in emerging leaves. In young seedlings, expressed in cotyledon epidermal cells. In hypocotyls, expressed in peripheral cells. In seedling roots, expressed in the epidermis, including root hairs, and throughout the cortex. In rosette leaves, expressed in the upper and lower epidermis. In roots of adult plants, expressed in the root tips and cortex of the mature root enclosing the stele. In flowering stalks, expressed in the epidermis. Expressed in the carpel epidermis.

The protein localises to the plastid. The protein resides in the chloroplast stroma. The enzyme catalyses (2R,3S)-3-isopropylmalate = (2S)-2-isopropylmalate. It functions in the pathway amino-acid biosynthesis; L-leucine biosynthesis; L-leucine from 3-methyl-2-oxobutanoate: step 2/4. In terms of biological role, catalyzes the isomerization between 2-isopropylmalate and 3-isopropylmalate, via the formation of 2-isopropylmaleate. Plays an essential role in leucine biosynthesis. Functions in both the biosynthesis of leucine, and in the methionine chain elongation pathway of aliphatic glucosinolate formation. Plays an essential role in female gametophyte development. The polypeptide is 3-isopropylmalate dehydratase small subunit 1 (Arabidopsis thaliana (Mouse-ear cress)).